The following is a 364-amino-acid chain: Chorismate synthase (364 aa).

The NADP(+) site is built by Arg-48 and Arg-54. FMN is bound by residues 125-127 (RSS), 238-239 (NA), Gly-278, 293-297 (KPTSS), and Arg-319.

It belongs to the chorismate synthase family. As to quaternary structure, homotetramer. The cofactor is FMNH2.

The catalysed reaction is 5-O-(1-carboxyvinyl)-3-phosphoshikimate = chorismate + phosphate. The protein operates within metabolic intermediate biosynthesis; chorismate biosynthesis; chorismate from D-erythrose 4-phosphate and phosphoenolpyruvate: step 7/7. Functionally, catalyzes the anti-1,4-elimination of the C-3 phosphate and the C-6 proR hydrogen from 5-enolpyruvylshikimate-3-phosphate (EPSP) to yield chorismate, which is the branch point compound that serves as the starting substrate for the three terminal pathways of aromatic amino acid biosynthesis. This reaction introduces a second double bond into the aromatic ring system. This Shewanella frigidimarina (strain NCIMB 400) protein is Chorismate synthase.